The chain runs to 184 residues: Troponin I, slow skeletal muscle (184 aa).

Pro-1 is subject to N-acetylproline; partial. Residues 1–45 are involved in binding TNC; that stretch reads PEVERKSKITASRKLLKSLMLAKAKECQQEHEAREAEKVRYLAER. Ser-55 carries the phosphoserine modification. Positions 94 to 115 are involved in binding TNC and actin; that stretch reads LKLKVLDLRGKFKRPPLRRVRV.

The protein belongs to the troponin I family. In terms of assembly, binds to actin and tropomyosin. In terms of processing, in the muscle sample, approximately 25% of the chains were blocked. Pro-1 is probably acetylated. Post-translationally, the N-terminus is blocked.

In terms of biological role, troponin I is the inhibitory subunit of troponin, the thin filament regulatory complex which confers calcium-sensitivity to striated muscle actomyosin ATPase activity. The chain is Troponin I, slow skeletal muscle (TNNI1) from Oryctolagus cuniculus (Rabbit).